The chain runs to 215 residues: Orotate phosphoribosyltransferase (215 aa).

Residue K26 coordinates 5-phospho-alpha-D-ribose 1-diphosphate. 34–35 is a binding site for orotate; it reads FF. 5-phospho-alpha-D-ribose 1-diphosphate contacts are provided by residues 72 to 73, R99, K100, K103, H105, and 124 to 132; these read YK and DDVITAGTA. 2 residues coordinate orotate: T128 and R156.

The protein belongs to the purine/pyrimidine phosphoribosyltransferase family. PyrE subfamily. In terms of assembly, homodimer. Mg(2+) is required as a cofactor.

It carries out the reaction orotidine 5'-phosphate + diphosphate = orotate + 5-phospho-alpha-D-ribose 1-diphosphate. The protein operates within pyrimidine metabolism; UMP biosynthesis via de novo pathway; UMP from orotate: step 1/2. Functionally, catalyzes the transfer of a ribosyl phosphate group from 5-phosphoribose 1-diphosphate to orotate, leading to the formation of orotidine monophosphate (OMP). The sequence is that of Orotate phosphoribosyltransferase from Cellvibrio japonicus (strain Ueda107) (Pseudomonas fluorescens subsp. cellulosa).